The chain runs to 140 residues: MLTDSDKKLVLQVWEKVIRHPDCGAEALERLFTTYPQTKTYFPHFDLHHGSDQVRNHGKKVLAALGNAVKSLGNLSQALSDLSDLHAYNLRVDPVNFKLLAQCFHVVLATHLGNDYTPEAHAAFDKFLSAVCTVLAEKYR.

In terms of domain architecture, Globin spans Met-1 to Arg-140. His-57 and His-86 together coordinate heme b.

The protein belongs to the globin family. Heterotetramer of two alpha-D chains and two beta chains. Red blood cells.

Its function is as follows. Involved in oxygen transport from the lung to the various peripheral tissues. This chain is Hemoglobin subunit alpha-D (HBAD), found in Columba livia (Rock dove).